A 948-amino-acid polypeptide reads, in one-letter code: Valine--tRNA ligase (948 aa).

The 'HIGH' region signature appears at 40–50; it reads PNVTGSLHMGH. Residues 551 to 555 carry the 'KMSKS' region motif; sequence KMSKS. Lysine 554 contacts ATP. Residues 879–945 are a coiled coil; it reads LIDKGAELAR…GKLAEQHARI (67 aa).

Belongs to the class-I aminoacyl-tRNA synthetase family. ValS type 1 subfamily. In terms of assembly, monomer.

Its subcellular location is the cytoplasm. The catalysed reaction is tRNA(Val) + L-valine + ATP = L-valyl-tRNA(Val) + AMP + diphosphate. Its function is as follows. Catalyzes the attachment of valine to tRNA(Val). As ValRS can inadvertently accommodate and process structurally similar amino acids such as threonine, to avoid such errors, it has a 'posttransfer' editing activity that hydrolyzes mischarged Thr-tRNA(Val) in a tRNA-dependent manner. This Pseudomonas savastanoi pv. phaseolicola (strain 1448A / Race 6) (Pseudomonas syringae pv. phaseolicola (strain 1448A / Race 6)) protein is Valine--tRNA ligase.